The chain runs to 262 residues: tRNA pseudouridine synthase A 2 (262 aa).

The active-site Nucleophile is Asp66. Tyr125 lines the substrate pocket.

This sequence belongs to the tRNA pseudouridine synthase TruA family. As to quaternary structure, homodimer.

It catalyses the reaction uridine(38/39/40) in tRNA = pseudouridine(38/39/40) in tRNA. Formation of pseudouridine at positions 38, 39 and 40 in the anticodon stem and loop of transfer RNAs. The sequence is that of tRNA pseudouridine synthase A 2 from Protochlamydia amoebophila (strain UWE25).